The sequence spans 201 residues: Receptor expression-enhancing protein 6 (201 aa).

3 consecutive transmembrane segments (helical) span residues 36-56, 89-109, and 117-137; these read LAAG…GASL, WVVY…LFWF, and CAFL…LLYH.

Belongs to the DP1 family. In terms of assembly, interacts with STX3. Interacts with clathrin. Expressed in the inner segment of rod photoreceptors and outer plexiform layer of the retina (at protein level). Expressed in liver, but not detected in brain, muscle, kidney, retinal cone photoreceptors or retinal ganglion cells (at protein level). Highly expressed in the ganglion cell layer of the retina and in liver, and also detected at low levels in kidney and testis. Isoform 1: Expressed in the retina. Isoform 2: Expressed in liver.

It is found in the endoplasmic reticulum membrane. It localises to the cytoplasmic vesicle. Its subcellular location is the clathrin-coated vesicle membrane. Its function is as follows. Required for correct function and survival of retinal photoreceptors. Required for retinal development. In rod photoreceptors, facilitates stability and/or trafficking of guanylate cyclases and is required to maintain endoplasmic reticulum and mitochondrial homeostasis. May play a role in clathrin-coated intracellular vesicle trafficking of proteins from the endoplasmic reticulum to the retinal rod plasma membrane. In Mus musculus (Mouse), this protein is Receptor expression-enhancing protein 6 (Reep6).